Consider the following 520-residue polypeptide: Laccase-1 (520 aa).

The first 21 residues, 1 to 21, serve as a signal peptide directing secretion; it reads MSRFHSLLAFVVASLTAVAHA. Plastocyanin-like domains follow at residues 23–148 and 160–302; these read IGPV…FVVY and VDND…ILRY. Asparagine 72 and asparagine 75 each carry an N-linked (GlcNAc...) asparagine glycan. Cu cation-binding residues include histidine 85, histidine 87, histidine 130, and histidine 132. Disulfide bonds link cysteine 106–cysteine 509 and cysteine 138–cysteine 226. Asparagine 229, asparagine 238, asparagine 354, and asparagine 361 each carry an N-linked (GlcNAc...) asparagine glycan. Residues 369 to 491 enclose the Plastocyanin-like 3 domain; sequence TVPVLLQIIS…AGFAVVFAED (123 aa). Residues histidine 416, histidine 419, histidine 421, histidine 473, cysteine 474, histidine 475, and histidine 479 each coordinate Cu cation.

It belongs to the multicopper oxidase family. In terms of assembly, homodimer. Cu cation serves as cofactor.

The protein resides in the secreted. The catalysed reaction is 4 hydroquinone + O2 = 4 benzosemiquinone + 2 H2O. Its function is as follows. Lignin degradation and detoxification of lignin-derived products. The sequence is that of Laccase-1 from Trametes villosa (White-rot fungus).